A 171-amino-acid polypeptide reads, in one-letter code: Ribosome maturation factor RimP (171 aa).

It belongs to the RimP family.

The protein resides in the cytoplasm. In terms of biological role, required for maturation of 30S ribosomal subunits. The sequence is that of Ribosome maturation factor RimP from Anaeromyxobacter dehalogenans (strain 2CP-1 / ATCC BAA-258).